The sequence spans 244 residues: Small ribosomal subunit protein uS2 (244 aa).

The protein belongs to the universal ribosomal protein uS2 family.

This is Small ribosomal subunit protein uS2 from Desulforudis audaxviator (strain MP104C).